The sequence spans 150 residues: Ribonuclease pancreatic delta-type (150 aa).

An N-terminal signal peptide occupies residues 1-25 (MGLEKSFILFSLLVLVLGWVQPSLG). Residue R35 participates in substrate binding. H37 functions as the Proton acceptor in the catalytic mechanism. Intrachain disulfides connect C51-C110, C65-C121, and C83-C136. Substrate is bound by residues 66 to 70 (KRVNT), K91, and R111. H145 functions as the Proton donor in the catalytic mechanism.

The protein belongs to the pancreatic ribonuclease family. As to quaternary structure, monomer.

It localises to the secreted. It catalyses the reaction an [RNA] containing cytidine + H2O = an [RNA]-3'-cytidine-3'-phosphate + a 5'-hydroxy-ribonucleotide-3'-[RNA].. It carries out the reaction an [RNA] containing uridine + H2O = an [RNA]-3'-uridine-3'-phosphate + a 5'-hydroxy-ribonucleotide-3'-[RNA].. Its function is as follows. Endonuclease that catalyzes the cleavage of RNA on the 3' side of pyrimidine nucleotides. Acts on single-stranded and double-stranded RNA. In Rattus rattus (Black rat), this protein is Ribonuclease pancreatic delta-type.